We begin with the raw amino-acid sequence, 144 residues long: Snaclec 6 (144 aa).

A signal peptide spans 1–23; the sequence is MGRFISVSFGLLVVFLSLSGTGA. 3 disulfides stabilise this stretch: Cys25/Cys36, Cys53/Cys142, and Cys119/Cys134. Residues 32–143 form the C-type lectin domain; the sequence is HEGHCYKVFK…CNFIAPVVCK (112 aa).

It belongs to the snaclec family. As to quaternary structure, heterodimer; disulfide-linked.

It localises to the secreted. Interferes with one step of hemostasis (modulation of platelet aggregation, or coagulation cascade, for example). This Daboia siamensis (Eastern Russel's viper) protein is Snaclec 6.